The sequence spans 426 residues: Tol-Pal system protein TolB (426 aa).

An N-terminal signal peptide occupies residues 1–25; it reads MNAMSRISRRIFLALALSLAGLAQA.

This sequence belongs to the TolB family. In terms of assembly, the Tol-Pal system is composed of five core proteins: the inner membrane proteins TolA, TolQ and TolR, the periplasmic protein TolB and the outer membrane protein Pal. They form a network linking the inner and outer membranes and the peptidoglycan layer.

It localises to the periplasm. Its function is as follows. Part of the Tol-Pal system, which plays a role in outer membrane invagination during cell division and is important for maintaining outer membrane integrity. This chain is Tol-Pal system protein TolB, found in Dechloromonas aromatica (strain RCB).